The sequence spans 281 residues: Bifunctional protein FolD (281 aa).

NADP(+) is bound by residues 165–167 (GRG), Thr192, and Val233.

This sequence belongs to the tetrahydrofolate dehydrogenase/cyclohydrolase family. Homodimer.

The catalysed reaction is (6R)-5,10-methylene-5,6,7,8-tetrahydrofolate + NADP(+) = (6R)-5,10-methenyltetrahydrofolate + NADPH. It carries out the reaction (6R)-5,10-methenyltetrahydrofolate + H2O = (6R)-10-formyltetrahydrofolate + H(+). The protein operates within one-carbon metabolism; tetrahydrofolate interconversion. In terms of biological role, catalyzes the oxidation of 5,10-methylenetetrahydrofolate to 5,10-methenyltetrahydrofolate and then the hydrolysis of 5,10-methenyltetrahydrofolate to 10-formyltetrahydrofolate. The polypeptide is Bifunctional protein FolD (Mycobacterium marinum (strain ATCC BAA-535 / M)).